Reading from the N-terminus, the 523-residue chain is 3-hydroxybenzoate--CoA/4-hydroxybenzoate--CoA ligase (523 aa).

Belongs to the ATP-dependent AMP-binding enzyme family. Benzoate-CoA ligase subfamily.

The enzyme catalyses 4-hydroxybenzoate + ATP + CoA = 4-hydroxybenzoyl-CoA + AMP + diphosphate. It catalyses the reaction 3-hydroxybenzoate + ATP + CoA = 3-hydroxybenzoyl-CoA + AMP + diphosphate. Catalyzes the ligation of 3-hydroxybenzoate or 4-hydroxybenzoate and CoA at the expense of ATP. The enzyme shows low activity towards benzoate, 4-aminobenzoate, 3-aminobenzoate, 3-fluorobenzoate, 4-fluorobenzoate, 3-chlorobenzoate, and 4-chlorobenzoate. There is no activity with 3,4-dihydroxybenzoate, 2,3-dihydroxybenzoate, and 2-hydroxybenzoate as substrates. The sequence is that of 3-hydroxybenzoate--CoA/4-hydroxybenzoate--CoA ligase (hcl) from Thauera aromatica.